The sequence spans 442 residues: D-serine dehydratase (442 aa).

The residue at position 118 (Lys118) is an N6-(pyridoxal phosphate)lysine.

The protein belongs to the serine/threonine dehydratase family. DsdA subfamily. Monomer. It depends on pyridoxal 5'-phosphate as a cofactor.

It catalyses the reaction D-serine = pyruvate + NH4(+). The polypeptide is D-serine dehydratase (Escherichia coli (strain K12 / MC4100 / BW2952)).